The following is a 376-amino-acid chain: Glucose-1-phosphate adenylyltransferase (376 aa).

Alpha-D-glucose 1-phosphate is bound by residues Tyr-101, Gly-166, 181–182 (EK), and Ser-192.

This sequence belongs to the bacterial/plant glucose-1-phosphate adenylyltransferase family. In terms of assembly, homotetramer.

The catalysed reaction is alpha-D-glucose 1-phosphate + ATP + H(+) = ADP-alpha-D-glucose + diphosphate. It participates in glycan biosynthesis; glycogen biosynthesis. Its function is as follows. Involved in the biosynthesis of ADP-glucose, a building block required for the elongation reactions to produce glycogen. Catalyzes the reaction between ATP and alpha-D-glucose 1-phosphate (G1P) to produce pyrophosphate and ADP-Glc. This is Glucose-1-phosphate adenylyltransferase from Bacillus cereus (strain ZK / E33L).